The sequence spans 1273 residues: MERIHVSVRARPLSSEDAKTSPWKISSDSIFMPNHSSLAFEFDRIFREDCKTVQVYEARTKEIVSAAVRGFNGTVFAYGQTNSGKTHTMRGSPIEPGVIPLAVHDLFDTIYQDASREFLLRMSYLEIYNEDINDLLAPEHRKLQIHENLEKGIFVAGLREEIVASPQQVLEMMEFGESHRHIGETNMNLYSSRSHTIFRMIIESRQKMQDEGVGNSCDAVRVSVLNLVDLAGSERAAKTGAEGVRLKEGSHINKSLMTLGTVIKKLSEGVETQGGHVPYRDSKLTRILQPALGGNANTAIICNITLAPIHADETKSSLQFASRALRVTNCAHVNEILTDAALLKRQKKEIEELRSKLKTSHSDHSEEEILNLRNTLLKSELERERIALELEEEKKAQAQRERVLQEQAKKIKNLSSMVLLSNRDEKREQDHFKKGKRRDTWCIGKLSRDSTSEDQSNVLSRGSSLESARSERETGPLLPFSELVNEPLYNINEEDEDSIEGTLEDSVLPDPCALVNVTSRKKPSIKQKNPVVVENELDRIQREYEALLLQYETERIISEIQIECLKVKLGEDGLSGDAKCKQSEVVGNVHCEEHVVNLRDPEAILLIKQLQEKINMLELEKSSSNRNLDDLVMVATEQNICAREKFAEIQEEIHAAREEAQVAREQLVSKESEVIDVINENFNSLVNVATEIEVLESEFQKYKASVETISSVMNEGLQDFAFFSPLIHDFTLFVRQSSEQHDSLINSYQTVQSSLKKKVLDVENEKLLLQEQCAGLQSQIEELNQEAQKHETSLKMLSEHHESERSDLLSHIECLEKDIGSLSSSSLAKEKENLRKDFEKTKTKLKDTESKLKNSMQDKTKLEAEKASAERELKRLHSQKALLERDISKQESFAGKRRDSLLVERSANQSLQEEFKQLEVLAFEMETTIASLEEELAAERGEKEEALCRNDGLGSEITDLTEKLEHSNTKLEHLQNDVTELKTRLEVSSSDQQQLETNVKQLLEEKEELAMHLANSLLEMEEEKAIWSSKEKALTEAVEEKIRLYKNIQIESLSKEMSEEKKELESCRLECVTLADRLRCSEENAKQDKESSLEKSLEIDRLGDELRSADAVSKQSQEVLKSDIDILKSEVQHACKMSDTFQREMDYVTSERQGLLARIEELSKELASSNRWQIENAKNPIQDLTLKISSQETNLHKDAAAENKEKAKLKMRLRGMQARLDAISLRYKQSVQESELMNRKFKEASAKLKEKLASKALEVLDLKKQLSASSRTM.

Residues 3–327 (RIHVSVRARP…LQFASRALRV (325 aa)) enclose the Kinesin motor domain. 79–86 (GQTNSGKT) is an ATP binding site. Residues 333 to 408 (VNEILTDAAL…QRERVLQEQA (76 aa)) are a coiled coil. A disordered region spans residues 452–474 (SEDQSNVLSRGSSLESARSERET). Residues 453–467 (EDQSNVLSRGSSLES) show a composition bias toward polar residues. Coiled coils occupy residues 602-674 (EAIL…ESEV) and 751-1023 (VQSS…MEEE).

This sequence belongs to the TRAFAC class myosin-kinesin ATPase superfamily. Kinesin family. KIN-7 subfamily.

This is Kinesin-like protein KIN-7O from Arabidopsis thaliana (Mouse-ear cress).